The chain runs to 345 residues: S-adenosylmethionine:tRNA ribosyltransferase-isomerase (345 aa).

The protein belongs to the QueA family. As to quaternary structure, monomer.

The protein localises to the cytoplasm. The enzyme catalyses 7-aminomethyl-7-carbaguanosine(34) in tRNA + S-adenosyl-L-methionine = epoxyqueuosine(34) in tRNA + adenine + L-methionine + 2 H(+). Its pathway is tRNA modification; tRNA-queuosine biosynthesis. Its function is as follows. Transfers and isomerizes the ribose moiety from AdoMet to the 7-aminomethyl group of 7-deazaguanine (preQ1-tRNA) to give epoxyqueuosine (oQ-tRNA). This Lactococcus lactis subsp. lactis (strain IL1403) (Streptococcus lactis) protein is S-adenosylmethionine:tRNA ribosyltransferase-isomerase.